We begin with the raw amino-acid sequence, 342 residues long: Alpha-(1,3)-fucosyltransferase 7 (342 aa).

At 1–14 (MNNAGHGPTRRLRG) the chain is on the cytoplasmic side. A helical; Signal-anchor for type II membrane protein membrane pass occupies residues 15-36 (LGVLAGVALLAALWLLWLLGSA). The Lumenal segment spans residues 37–342 (PRGTPAPQPT…YEDLEGWFQA (306 aa)). Cysteines 68 and 76 form a disulfide. A glycan (N-linked (GlcNAc...) asparagine) is linked at asparagine 81. The cysteines at positions 211 and 214 are disulfide-linked. N-linked (GlcNAc...) asparagine glycosylation is present at asparagine 291. Cysteines 318 and 321 form a disulfide.

The protein belongs to the glycosyltransferase 10 family. Post-translationally, N-glycosylated. As to expression, leukocytic/myeloid lineage cells.

Its subcellular location is the golgi apparatus. The protein localises to the golgi stack membrane. The enzyme catalyses an N-acetyl-alpha-neuraminyl-(2-&gt;3)-beta-D-galactosyl-(1-&gt;4)-N-acetyl-beta-D-glucosaminyl derivative + GDP-beta-L-fucose = an alpha-Neu5Ac-(2-&gt;3)-beta-D-Gal-(1-&gt;4)-[alpha-L-Fuc-(1-&gt;3)]-beta-D-GlcNAc derivative + GDP + H(+). It carries out the reaction a neolactoside IV(3)-alpha-NeuAc-nLc4Cer + GDP-beta-L-fucose = a neolactoside IV(3)-alpha-NeuNAc,III(3)-alpha-Fuc-nLc4Cer + GDP + H(+). It catalyses the reaction a neolactoside VI(3)-alpha-NeuNAc-nLc6Cer + GDP-beta-L-fucose = a neolactoside VI(3)-alpha-NeuAc,V(3)-alphaFuc-nLc6Cer + GDP + H(+). The catalysed reaction is an alpha-Neu5Ac-(2-&gt;3)-beta-D-Gal-(1-&gt;4)-beta-D-GlcNAc-(1-&gt;3)-beta-D-Gal-(1-&gt;4)-[alpha-L-Fuc-(1-&gt;3)]-beta-D-GlcNAc derivative + GDP-beta-L-fucose = an alpha-Neu5Ac-(2-&gt;3)-beta-D-Gal-(1-&gt;4)-[alpha-L-Fuc-(1-&gt;3)]-beta-D-GlcNAc-(1-&gt;3)-beta-D-Gal-(1-&gt;4)-[alpha-L-Fuc-(1-&gt;3)]-beta-D-GlcNAc derivative + GDP + H(+). The enzyme catalyses an alpha-Neu5Ac-(2-&gt;3)-beta-D-Gal-(1-&gt;4)-beta-D-GlcNAc6S derivative + GDP-beta-L-fucose = an alpha-Neu5Ac-(2-&gt;3)-beta-D-Gal-(1-&gt;4)-[alpha-L-Fuc-(1-&gt;3)]-beta-D-GlcNAc6S derivative + GDP + H(+). It carries out the reaction alpha-Neu5Ac-(2-&gt;3)-beta-D-Gal-(1-&gt;4)-beta-D-GlcNAc-(1-&gt;3)-beta-D-Gal-(1-&gt;4)-D-Glc + GDP-beta-L-fucose = alpha-Neu5Ac-(2-&gt;3)-beta-D-Gal-(1-&gt;4)-[alpha-L-Fuc-(1-&gt;3)]-beta-D-GlcNAc-(1-&gt;3)-beta-D-Gal-(1-&gt;4)-D-Glc + GDP + H(+). It catalyses the reaction alpha-Neu5Ac-(2-&gt;3)-beta-D-Gal-(1-&gt;4)-beta-D-GlcNAc-(1-&gt;3)-beta-D-Gal-(1-&gt;4)-[alpha-L-Fuc-(1-&gt;3)]-beta-D-GlcNAc-(1-&gt;3)-beta-D-Gal-(1-&gt;4)-beta-D-GlcNAc + GDP-beta-L-fucose = alpha-Neu5Ac-(2-&gt;3)-beta-D-Gal-(1-&gt;4)-[alpha-L-Fuc-(1-&gt;3)]-beta-D-GlcNAc-(1-&gt;3)-beta-D-Gal-(1-&gt;4)-[alpha-L-Fuc-(1-&gt;3)]-beta-D-GlcNAc-(1-&gt;3)-beta-D-Gal-(1-&gt;4)-beta-D-GlcNAc + GDP + H(+). The catalysed reaction is alpha-Neu5Ac-(2-&gt;3)-beta-D-Gal-(1-&gt;4)-beta-D-GlcNAc-(1-&gt;3)-beta-D-Gal-(1-&gt;4)-beta-D-GlcNAc-(1-&gt;3)-beta-D-Gal-(1-&gt;4)-beta-D-GlcNAc + GDP-beta-L-fucose = alpha-Neu5Ac-(2-&gt;3)-beta-D-Gal-(1-&gt;4)-[alpha-L-Fuc-(1-&gt;3)]-beta-D-GlcNAc-(1-&gt;3)-beta-D-Gal-(1-&gt;4)-beta-D-GlcNAc-(1-&gt;3)-beta-D-Gal-(1-&gt;4)-beta-D-GlcNAc + GDP + H(+). It participates in protein modification; protein glycosylation. With respect to regulation, inhibited by NaCl. Inhibited by GDP in a concentration dependent manner, with an IC(50) value of 93 uM. Also inhibited by GMP and GTP. Inhibited by N-ethylmaleimide. Activated by poly(ethylene glycol) by enhancing the thermal stability of FUT7. Activated by Mn2+, Ca2+, and Mg2+. Both panosialin A and B inhibit activity with IC(50) values of 4.8 and 5.3 ug/ml, respectively. Inhibited by gallic acid (GA) and (-)-epigallocatechin gallate (EGCG) in a time-dependent and irreversible manner with IC(50) values of 60 and 700 nM, respectively. Catalyzes the transfer of L-fucose, from a guanosine diphosphate-beta-L-fucose, to the N-acetyl glucosamine (GlcNAc) of a distal alpha2,3 sialylated lactosamine unit of a glycoprotein or a glycolipid-linked sialopolylactosamines chain through an alpha-1,3 glycosidic linkage and participates in the final fucosylation step in the biosynthesis of the sialyl Lewis X (sLe(x)), a carbohydrate involved in cell and matrix adhesion during leukocyte trafficking and fertilization. In vitro, also synthesizes sialyl-dimeric-Lex structures, from VIM-2 structures and both di-fucosylated and trifucosylated structures from mono-fucosylated precursors. However does not catalyze alpha 1-3 fucosylation when an internal alpha 1-3 fucosylation is present in polylactosamine chain and the fucosylation rate of the internal GlcNAc residues is reduced once fucose has been added to the distal GlcNAc. Also catalyzes the transfer of a fucose from GDP-beta-fucose to the 6-sulfated a(2,3)sialylated substrate to produce 6-sulfo sLex mediating significant L-selectin-dependent cell adhesion. Through sialyl-Lewis(x) biosynthesis, can control SELE- and SELP-mediated cell adhesion with leukocytes and allows leukocytes tethering and rolling along the endothelial tissue thereby enabling the leukocytes to accumulate at a site of inflammation. May enhance embryo implantation through sialyl Lewis X (sLeX)-mediated adhesion of embryo cells to endometrium. May affect insulin signaling by up-regulating the phosphorylation and expression of some signaling molecules involved in the insulin-signaling pathway through SLe(x) which is present on the glycans of the INSRR alpha subunit. The protein is Alpha-(1,3)-fucosyltransferase 7 of Homo sapiens (Human).